The chain runs to 217 residues: Small ribosomal subunit protein uS3 (217 aa).

The KH type-2 domain maps to 38–106; that stretch reads IRKFIQKELA…QVHINIIEIK (69 aa).

This sequence belongs to the universal ribosomal protein uS3 family. In terms of assembly, part of the 30S ribosomal subunit. Forms a tight complex with proteins S10 and S14.

Its function is as follows. Binds the lower part of the 30S subunit head. Binds mRNA in the 70S ribosome, positioning it for translation. This Streptococcus uberis (strain ATCC BAA-854 / 0140J) protein is Small ribosomal subunit protein uS3.